A 213-amino-acid polypeptide reads, in one-letter code: C-type lectin domain family 4 member C (213 aa).

Residues 1–21 lie on the Cytoplasmic side of the membrane; that stretch reads MVPEEEPQDREKGLWWFQLKV. A helical; Signal-anchor for type II membrane protein membrane pass occupies residues 22 to 44; that stretch reads WSMAVVSILLLSVCFTVSSVVPH. At 45–213 the chain is on the extracellular side; it reads NFMYSKTVKR…SICKMKKIYI (169 aa). 2 disulfide bridges follow: Cys70-Cys82 and Cys83-Cys94. In terms of domain architecture, C-type lectin spans 90–207; sequence FQSSCYFIST…CHVPQKSICK (118 aa). 2 N-linked (GlcNAc...) asparagine glycosylation sites follow: Asn110 and Asn137. Cystine bridges form between Cys111-Cys206 and Cys180-Cys198. Ser139 is a binding site for a carbohydrate. N-linked (GlcNAc...) asparagine glycosylation occurs at Asn164. Residues Glu172, Asn174, and Glu178 each contribute to the Ca(2+) site. Residues Glu178, 184–186, Asn194, 194–195, and Gln202 contribute to the a carbohydrate site; these read NFR and ND. Positions 194 and 195 each coordinate Ca(2+).

In terms of assembly, homodimer. In terms of tissue distribution, expressed in plasmacytoid dendritic cells (PDCs). Constitutively expressed in immature monocyte-derived dendritic cells (iMDDC) and is significantly down-regulated upon maturation with LPS but not with TNF-alpha.

Its subcellular location is the cell membrane. Lectin-type cell surface receptor which may play a role in antigen capturing by dendritic cells. Specifically recognizes non-sialylated galactose-terminated biantennary glycans containing the trisaccharide epitope Gal(beta1-3/4)GlcNAc(beta1-2)Man. Binds to serum IgG. Efficiently targets ligand into antigen-processing and peptide-loading compartments for presentation to T-cells. May mediate potent inhibition of induction of IFN-alpha/beta expression in plasmacytoid dendritic cells. May act as a signaling receptor that activates protein-tyrosine kinases and mobilizes intracellular calcium. The sequence is that of C-type lectin domain family 4 member C (CLEC4C) from Homo sapiens (Human).